The primary structure comprises 415 residues: Tyrosine--tRNA ligase (415 aa).

Positions 54–63 match the 'HIGH' region motif; the sequence is PTGTDIHIGH. Positions 248–252 match the 'KMSKS' region motif; the sequence is KMSKS. Lysine 251 lines the ATP pocket. Residues 351-415 enclose the S4 RNA-binding domain; the sequence is AKAFYLFSKM…GKKKFLRVST (65 aa).

Belongs to the class-I aminoacyl-tRNA synthetase family. TyrS type 2 subfamily. As to quaternary structure, homodimer.

It localises to the cytoplasm. It catalyses the reaction tRNA(Tyr) + L-tyrosine + ATP = L-tyrosyl-tRNA(Tyr) + AMP + diphosphate + H(+). In terms of biological role, catalyzes the attachment of tyrosine to tRNA(Tyr) in a two-step reaction: tyrosine is first activated by ATP to form Tyr-AMP and then transferred to the acceptor end of tRNA(Tyr). This is Tyrosine--tRNA ligase from Prochlorococcus marinus (strain NATL2A).